Here is a 95-residue protein sequence, read N- to C-terminus: MSVTTKDVAYIAELARLKFTDAEQEKMASELNMILHYIEKLNGIDTEGVEPLSTIHDQINVLRADVEHTPLSNDEALKNAPDSQDRFFKVPKVIG.

This sequence belongs to the GatC family. In terms of assembly, heterotrimer of A, B and C subunits.

It carries out the reaction L-glutamyl-tRNA(Gln) + L-glutamine + ATP + H2O = L-glutaminyl-tRNA(Gln) + L-glutamate + ADP + phosphate + H(+). The catalysed reaction is L-aspartyl-tRNA(Asn) + L-glutamine + ATP + H2O = L-asparaginyl-tRNA(Asn) + L-glutamate + ADP + phosphate + 2 H(+). Functionally, allows the formation of correctly charged Asn-tRNA(Asn) or Gln-tRNA(Gln) through the transamidation of misacylated Asp-tRNA(Asn) or Glu-tRNA(Gln) in organisms which lack either or both of asparaginyl-tRNA or glutaminyl-tRNA synthetases. The reaction takes place in the presence of glutamine and ATP through an activated phospho-Asp-tRNA(Asn) or phospho-Glu-tRNA(Gln). This Chlorobaculum tepidum (strain ATCC 49652 / DSM 12025 / NBRC 103806 / TLS) (Chlorobium tepidum) protein is Aspartyl/glutamyl-tRNA(Asn/Gln) amidotransferase subunit C.